Here is a 275-residue protein sequence, read N- to C-terminus: 2,3,4,5-tetrahydropyridine-2,6-dicarboxylate N-succinyltransferase (275 aa).

Substrate-binding residues include Arg-106 and Asp-143.

Belongs to the transferase hexapeptide repeat family. Homotrimer.

It is found in the cytoplasm. It catalyses the reaction (S)-2,3,4,5-tetrahydrodipicolinate + succinyl-CoA + H2O = (S)-2-succinylamino-6-oxoheptanedioate + CoA. Its pathway is amino-acid biosynthesis; L-lysine biosynthesis via DAP pathway; LL-2,6-diaminopimelate from (S)-tetrahydrodipicolinate (succinylase route): step 1/3. This chain is 2,3,4,5-tetrahydropyridine-2,6-dicarboxylate N-succinyltransferase, found in Paraburkholderia xenovorans (strain LB400).